Here is a 214-residue protein sequence, read N- to C-terminus: Probable transaldolase (214 aa).

Lysine 83 (schiff-base intermediate with substrate) is an active-site residue.

The protein belongs to the transaldolase family. Type 3B subfamily.

It is found in the cytoplasm. The catalysed reaction is D-sedoheptulose 7-phosphate + D-glyceraldehyde 3-phosphate = D-erythrose 4-phosphate + beta-D-fructose 6-phosphate. It participates in carbohydrate degradation; pentose phosphate pathway; D-glyceraldehyde 3-phosphate and beta-D-fructose 6-phosphate from D-ribose 5-phosphate and D-xylulose 5-phosphate (non-oxidative stage): step 2/3. Transaldolase is important for the balance of metabolites in the pentose-phosphate pathway. This is Probable transaldolase from Geobacter sp. (strain M21).